The primary structure comprises 629 residues: tRNA uridine 5-carboxymethylaminomethyl modification enzyme MnmG (629 aa).

Residues 13 to 18 (GGGHAG), Val-125, and Ser-180 each bind FAD. Residue 273–287 (GPRYCPSIEDKVMRF) participates in NAD(+) binding. Residue Gln-370 coordinates FAD.

It belongs to the MnmG family. Homodimer. Heterotetramer of two MnmE and two MnmG subunits. FAD is required as a cofactor.

It is found in the cytoplasm. NAD-binding protein involved in the addition of a carboxymethylaminomethyl (cmnm) group at the wobble position (U34) of certain tRNAs, forming tRNA-cmnm(5)s(2)U34. In Citrobacter koseri (strain ATCC BAA-895 / CDC 4225-83 / SGSC4696), this protein is tRNA uridine 5-carboxymethylaminomethyl modification enzyme MnmG.